The following is a 125-amino-acid chain: Small ribosomal subunit protein uS12 (125 aa).

The interval 9–31 (RQGREVEKIKSKSPAMENSPQRR) is disordered. Asp-89 carries the 3-methylthioaspartic acid modification. Residues 106-125 (GVKDRKQSRSKYGAKRPKKA) are disordered. Over residues 113–125 (SRSKYGAKRPKKA) the composition is skewed to basic residues.

Belongs to the universal ribosomal protein uS12 family. In terms of assembly, part of the 30S ribosomal subunit. Contacts proteins S8 and S17. May interact with IF1 in the 30S initiation complex.

Its function is as follows. With S4 and S5 plays an important role in translational accuracy. Functionally, interacts with and stabilizes bases of the 16S rRNA that are involved in tRNA selection in the A site and with the mRNA backbone. Located at the interface of the 30S and 50S subunits, it traverses the body of the 30S subunit contacting proteins on the other side and probably holding the rRNA structure together. The combined cluster of proteins S8, S12 and S17 appears to hold together the shoulder and platform of the 30S subunit. This Polaromonas sp. (strain JS666 / ATCC BAA-500) protein is Small ribosomal subunit protein uS12.